The chain runs to 194 residues: RNA polymerase II subunit A C-terminal domain phosphatase SSU72 like protein 2 (194 aa).

The protein belongs to the SSU72 phosphatase family.

It localises to the nucleus. It catalyses the reaction O-phospho-L-seryl-[protein] + H2O = L-seryl-[protein] + phosphate. The catalysed reaction is O-phospho-L-threonyl-[protein] + H2O = L-threonyl-[protein] + phosphate. Its function is as follows. Protein phosphatase that catalyzes the dephosphorylation of the C-terminal domain of RNA polymerase II. Plays a role in RNA processing and termination. In Homo sapiens (Human), this protein is RNA polymerase II subunit A C-terminal domain phosphatase SSU72 like protein 2.